The primary structure comprises 303 residues: 1D-myo-inositol 2-acetamido-2-deoxy-alpha-D-glucopyranoside deacetylase (303 aa).

Residues histidine 13, aspartate 16, and histidine 147 each coordinate Zn(2+).

Belongs to the MshB deacetylase family. Zn(2+) is required as a cofactor.

The enzyme catalyses 1D-myo-inositol 2-acetamido-2-deoxy-alpha-D-glucopyranoside + H2O = 1D-myo-inositol 2-amino-2-deoxy-alpha-D-glucopyranoside + acetate. Its function is as follows. Catalyzes the deacetylation of 1D-myo-inositol 2-acetamido-2-deoxy-alpha-D-glucopyranoside (GlcNAc-Ins) in the mycothiol biosynthesis pathway. This chain is 1D-myo-inositol 2-acetamido-2-deoxy-alpha-D-glucopyranoside deacetylase, found in Mycobacterium tuberculosis (strain ATCC 25177 / H37Ra).